The following is a 242-amino-acid chain: Dehydration-responsive element-binding protein 1J (242 aa).

A compositionally biased stretch (low complexity) spans 20–29; it reads SSATTAATAT. The disordered stretch occupies residues 20 to 44; that stretch reads SSATTAATATGPASPKRPAGRTKFQ. The AP2/ERF DNA-binding region spans 50-109; sequence VFRGVRRRGRAGRWVCEVRVPGSRGDRLWVGTFDTAEEAARAHDAAMLALCGASASLNFA. The tract at residues 143–184 is disordered; it reads FQRRGSTAATATATSGDAASTAPPSSSPVLSPNDDNASSAST. Over residues 148–184 the composition is skewed to low complexity; it reads STAATATATSGDAASTAPPSSSPVLSPNDDNASSAST.

It belongs to the AP2/ERF transcription factor family. ERF subfamily.

It is found in the nucleus. In terms of biological role, transcriptional activator that binds specifically to the DNA sequence 5'-[AG]CCGAC-3'. Binding to the C-repeat/DRE element mediates high salinity- and dehydration-inducible transcription. The polypeptide is Dehydration-responsive element-binding protein 1J (DREB1J) (Oryza sativa subsp. japonica (Rice)).